Here is a 973-residue protein sequence, read N- to C-terminus: Vacuolar membrane protease (973 aa).

Residues 1–15 (MARQYSRTNPLGFTP) lie on the Cytoplasmic side of the membrane. Residues 16 to 36 (WPVTIITALVYLALVIPLLVV) traverse the membrane as a helical segment. Residues 37–383 (QHVVPSAPGS…STLAVFELHT (347 aa)) lie on the Vacuolar side of the membrane. N-linked (GlcNAc...) asparagine glycosylation is found at asparagine 52 and asparagine 115. Zn(2+)-binding residues include histidine 167 and aspartate 179. The active-site Proton acceptor is glutamate 213. Zn(2+) is bound by residues glutamate 214, glutamate 239, and histidine 312. The chain crosses the membrane as a helical span at residues 384–404 (LFALSVTLLIVAPLVLLATSI). Residues 405-438 (ALVRADRMYLFRSTARVPGSDDFDEGVSLQGVRG) lie on the Cytoplasmic side of the membrane. Residues 439 to 459 (FFRFPFLLVIPTGVAVGLAYL) traverse the membrane as a helical segment. Over 460–469 (VTKINPYIIH) the chain is Vacuolar. A helical membrane pass occupies residues 470–490 (SSEYAVWSMMISAWVFLAWFV). Over 491–504 (SRVADFARPSAFHR) the chain is Cytoplasmic. The chain crosses the membrane as a helical span at residues 505-525 (VYVLTWMFVAEWVLLVIATVY). Topologically, residues 526-529 (ENRY) are vacuolar. Residues 530–550 (GLAGGYFVFFALSGTFLATWI) traverse the membrane as a helical segment. Topologically, residues 551-674 (SYLELFALPR…GLPKWTWVLQ (124 aa)) are cytoplasmic. The segment at 572–623 (SRYASNHGSRLGTSSGEHGMDDAEDEEDDDGDDEDEARNVEEEPTESTSLLR) is disordered. Over residues 574-587 (YASNHGSRLGTSSG) the composition is skewed to polar residues. The span at 593–607 (DAEDEEDDDGDDEDE) shows a compositional bias: acidic residues. A helical membrane pass occupies residues 675-695 (FLLSAPIVLILVGPLALLLTA). At 696-708 (ALRQTAQDGSSPL) the chain is on the vacuolar side. The chain crosses the membrane as a helical span at residues 709 to 729 (FVYIAIAVLTTLLVTPLLPFI). Residues 730–735 (HRYTHH) lie on the Cytoplasmic side of the membrane. A helical transmembrane segment spans residues 736–756 (IPLFLLLVFTGTLIYNLVAFP). Topologically, residues 757 to 973 (FSPSNRLKLF…LVEGSRRFEV (217 aa)) are vacuolar. Asparagine 803 and asparagine 839 each carry an N-linked (GlcNAc...) asparagine glycan.

This sequence belongs to the peptidase M28 family. Zn(2+) is required as a cofactor.

The protein localises to the vacuole membrane. May be involved in vacuolar sorting and osmoregulation. The sequence is that of Vacuolar membrane protease from Aspergillus clavatus (strain ATCC 1007 / CBS 513.65 / DSM 816 / NCTC 3887 / NRRL 1 / QM 1276 / 107).